Here is a 139-residue protein sequence, read N- to C-terminus: Ribonuclease P protein component (139 aa).

Belongs to the RnpA family. In terms of assembly, consists of a catalytic RNA component (M1 or rnpB) and a protein subunit.

The catalysed reaction is Endonucleolytic cleavage of RNA, removing 5'-extranucleotides from tRNA precursor.. In terms of biological role, RNaseP catalyzes the removal of the 5'-leader sequence from pre-tRNA to produce the mature 5'-terminus. It can also cleave other RNA substrates such as 4.5S RNA. The protein component plays an auxiliary but essential role in vivo by binding to the 5'-leader sequence and broadening the substrate specificity of the ribozyme. The sequence is that of Ribonuclease P protein component from Chlamydia felis (strain Fe/C-56) (Chlamydophila felis).